The chain runs to 225 residues: Transcriptional regulatory protein AfsQ1 (225 aa).

Residues 3–116 (SLLLIEDDDA…VLDARIRAVL (114 aa)) form the Response regulatory domain. Asp-52 is modified (4-aspartylphosphate). Positions 124–223 (TDSASFGSLV…VRGVGYRLDP (100 aa)) form a DNA-binding region, ompR/PhoB-type.

Post-translationally, phosphorylated by AfsQ2.

The protein localises to the cytoplasm. It is found in the nucleoid. In terms of biological role, forms part of a two-component regulatory system AfsQ1/AfsQ2 involved in secondary metabolism. The polypeptide is Transcriptional regulatory protein AfsQ1 (Streptomyces coelicolor (strain ATCC BAA-471 / A3(2) / M145)).